The chain runs to 745 residues: MFTKYSHHNGYQDGSHLQPFQYQQQTYNQQSYLRQQQQAPQQISYGFNQPNSPTSSSSTPSSSTAMGNSFQNQRQINLQQQQQQEQFLQEQVFYQQQLLQQQSQIKEQQRQKEQKQKTNILNIYKEGKQKIMMSFYNLYRNYPTEPPHFSPSPIWLMGRCYTSKDNNSNNNSNNNQVPQTQPTQLQQSIGIFQNNNSNSNNNNNHNNNHNNNNNNLTTDLIYRPAIESGFLSDVASMIWFSYRKDFPPIENTNITTDIGWGCMLRTGQMILARALIKHLYKENDMVPEIERKKPHSNYSQVLAWFSDYPSKEHVYGIHQIVNKKQAMEKNNRKQQILREQVISLNRGGGGSSKGKKKKEKEEEINDNVEEWLAPTRISNILRQLIKFQHLEDLEMYVPTDGVIYKDYINNLCNNSNTHNHYQIIQQQLQHLREQQNIQQNNNKNNNNNNPTTTTTTTTTATSSNNNNNQSPPSRVPNGYNNQVFDDESLFDYNTAISSIPPKWKSLIIMIPLKLGADKLNSTYIEKLKLLLKLPQSLGFIGGKPKQSFYFIGFQDDQVIYLDPHFVQESVNPNSFDYSNTYSGCIPQKMPFTQLDPSLSIGFYCRDQASFEDLCDRLSVINNCEFPIISVCQKLPDYQIECELVDDYAESETTEMLAITIANGGNNHSCIPENIVVDDEEFIVHHHIPYNPNNNQNNNQNNNNNNNKNNNNNTNQQQTPNYPPKLNTYQPDFSSDGEIDDFTMVG.

3 stretches are compositionally biased toward low complexity: residues 29 to 42 (QQSY…APQQ), 52 to 64 (SPTS…SSST), and 194 to 215 (NNNS…NNNN). Disordered stretches follow at residues 29 to 68 (QQSY…AMGN) and 192 to 215 (FQNN…NNNN). The Nucleophile role is filled by Cys-262. Disordered regions lie at residues 344 to 363 (LNRG…KEEE) and 439 to 480 (QNNN…NGYN). Residues 439-477 (QNNNKNNNNNNPTTTTTTTTTATSSNNNNNQSPPSRVPN) are compositionally biased toward low complexity. Residues Asp-562 and His-564 contribute to the active site. Positions 686 to 745 (HIPYNPNNNQNNNQNNNNNNNKNNNNNTNQQQTPNYPPKLNTYQPDFSSDGEIDDFTMVG) are disordered. Over residues 688–719 (PYNPNNNQNNNQNNNNNNNKNNNNNTNQQQTP) the composition is skewed to low complexity. Positions 734 to 745 (SDGEIDDFTMVG) are enriched in acidic residues.

The protein belongs to the peptidase C54 family.

The protein localises to the cytoplasm. It catalyses the reaction [protein]-C-terminal L-amino acid-glycyl-phosphatidylethanolamide + H2O = [protein]-C-terminal L-amino acid-glycine + a 1,2-diacyl-sn-glycero-3-phosphoethanolamine. Its function is as follows. Cysteine protease that plays a key role in autophagy by mediating both proteolytic activation and delipidation of ATG8 family proteins. The protease activity is required for proteolytic activation of ATG8 family proteins: cleaves the C-terminal amino acid of ATG8 proteins to reveal a C-terminal glycine. Exposure of the glycine at the C-terminus is essential for ATG8 proteins conjugation to phosphatidylethanolamine (PE) and insertion to membranes, which is necessary for autophagy. In addition to the protease activity, also mediates delipidation of PE-conjugated ATG8 proteins. The sequence is that of Cysteine protease atg4 (atg4-1) from Dictyostelium discoideum (Social amoeba).